A 264-amino-acid polypeptide reads, in one-letter code: Cancer/testis antigen 55 (264 aa).

The disordered stretch occupies residues 242-264; sequence SSSGFQDDGGLGRPKRERRSQSI. Residues 254–264 are compositionally biased toward basic residues; the sequence is RPKRERRSQSI.

In terms of assembly, interacts with GABARAP; this interaction may be important for GABARAP protein stability. Isoform 1 interacts with LAMP2; this interaction may be important for LAMP2 protein stability. As to expression, testis-specific. Expressed in spermatozoa (at protein level).

It is found in the cytoplasm. Its subcellular location is the cytoplasmic vesicle. It localises to the secretory vesicle. The protein localises to the acrosome. The protein resides in the cell projection. It is found in the cilium. Its subcellular location is the flagellum. Plays a role in spermatogenesis, possibly acting in the regulation of the autophagy pathway. This Homo sapiens (Human) protein is Cancer/testis antigen 55 (CT55).